The chain runs to 171 residues: 3-hydroxydecanoyl-[acyl-carrier-protein] dehydratase (171 aa).

Residue His70 is part of the active site.

Belongs to the thioester dehydratase family. FabA subfamily. Homodimer.

It is found in the cytoplasm. The catalysed reaction is a (3R)-hydroxyacyl-[ACP] = a (2E)-enoyl-[ACP] + H2O. It carries out the reaction (3R)-hydroxydecanoyl-[ACP] = (2E)-decenoyl-[ACP] + H2O. The enzyme catalyses (2E)-decenoyl-[ACP] = (3Z)-decenoyl-[ACP]. The protein operates within lipid metabolism; fatty acid biosynthesis. Its function is as follows. Necessary for the introduction of cis unsaturation into fatty acids. Catalyzes the dehydration of (3R)-3-hydroxydecanoyl-ACP to E-(2)-decenoyl-ACP and then its isomerization to Z-(3)-decenoyl-ACP. Can catalyze the dehydratase reaction for beta-hydroxyacyl-ACPs with saturated chain lengths up to 16:0, being most active on intermediate chain length. This is 3-hydroxydecanoyl-[acyl-carrier-protein] dehydratase from Azotobacter vinelandii (strain DJ / ATCC BAA-1303).